Consider the following 149-residue polypeptide: Large ribosomal subunit protein bL9 (149 aa).

This sequence belongs to the bacterial ribosomal protein bL9 family.

In terms of biological role, binds to the 23S rRNA. The protein is Large ribosomal subunit protein bL9 of Mycoplasma pneumoniae (strain ATCC 29342 / M129 / Subtype 1) (Mycoplasmoides pneumoniae).